Reading from the N-terminus, the 412-residue chain is Divalent metal cation transporter MntH (412 aa).

11 consecutive transmembrane segments (helical) span residues Leu-19–Ala-39, Ala-46–Ile-66, Val-94–Ile-114, Leu-122–Ile-142, Val-156–Gln-176, Ala-196–His-216, Ile-241–Phe-261, Val-290–Gly-310, Thr-329–Leu-349, Val-350–Phe-370, and Ile-389–Ala-409.

This sequence belongs to the NRAMP family.

Its subcellular location is the cell inner membrane. H(+)-stimulated, divalent metal cation uptake system. The polypeptide is Divalent metal cation transporter MntH (Citrobacter koseri (strain ATCC BAA-895 / CDC 4225-83 / SGSC4696)).